The sequence spans 224 residues: Inhibitor of apoptosis protein (224 aa).

Residues 29 to 92 form a BIR repeat; the sequence is VDARNQSFAI…GFWSRNCGFM (64 aa). Positions 62, 65, 82, and 89 each coordinate Zn(2+). The C4-type zinc-finger motif lies at 189 to 207; the sequence is CMTCGIEPIKKDENFCNAC.

The protein belongs to the asfivirus IAP family. As to quaternary structure, interacts with subunit p17 of host CASP3.

The protein resides in the host cytoplasm. Its subcellular location is the virion. Functionally, prevent apoptosis of host cell by inhibiting caspase-3/CASP3 activation to promote the viral replication. Also induces the activation of host NF-kappaB. The polypeptide is Inhibitor of apoptosis protein (Ornithodoros (relapsing fever ticks)).